The sequence spans 260 residues: ProSAAS (260 aa).

The signal sequence occupies residues 1–33 (MAGSPLLWGPRAGGVGLLVLLLLGLFRPPPALC). The interval 34 to 215 (ARPVKEPRGL…SADSEGVAAP (182 aa)) is proSAAS(1-180). An O-linked (GalNAc...) threonine glycan is attached at Thr-53. The disordered stretch occupies residues 165–188 (RPRPPVYDDGPAGPDAEEAGDETP). Acidic residues predominate over residues 179 to 188 (DAEEAGDETP). Positions 221 to 260 (AADHDVGSELPPEGVLGALLRVKRLETPAPQVPARRLLPP) are C-terminal inhibitory domain; interacts with PCSK1. Ser-228 carries O-linked (GalNAc...) serine glycosylation. The short motif at 239-244 (LLRVKR) is the Sufficient for inhibition of PCSK1 element. O-linked (GalNAc...) threonine glycosylation is present at Thr-247.

As to quaternary structure, interacts via the C-terminal inhibitory domain with PCSK1 66 kDa form. Post-translationally, proteolytically cleaved in the Golgi. O-glycosylated with a core 1 or possibly core 8 glycan. In terms of tissue distribution, expressed in brain and pancreas.

The protein resides in the secreted. The protein localises to the golgi apparatus. Its subcellular location is the trans-Golgi network. May function in the control of the neuroendocrine secretory pathway. Proposed be a specific endogenous inhibitor of PCSK1. ProSAAS and Big PEN-LEN, both containing the C-terminal inhibitory domain, but not the further processed peptides reduce PCSK1 activity in the endoplasmic reticulum and Golgi. It reduces the activity of the 84 kDa form but not the autocatalytically derived 66 kDa form of PCSK1. Subsequent processing of proSAAS may eliminate the inhibition. Slows down convertase-mediated processing of proopiomelanocortin and proenkephalin. May control the intracellular timing of PCSK1 rather than its total level of activity. Functionally, endogenous ligand for GPR171. Neuropeptide involved in the regulation of feeding. The polypeptide is ProSAAS (PCSK1N) (Homo sapiens (Human)).